A 137-amino-acid polypeptide reads, in one-letter code: S-adenosylmethionine decarboxylase proenzyme (137 aa).

S63 (schiff-base intermediate with substrate; via pyruvic acid) is an active-site residue. S63 bears the Pyruvic acid (Ser); by autocatalysis mark. Residue H68 is the Proton acceptor; for processing activity of the active site. C83 serves as the catalytic Proton donor; for catalytic activity.

The protein belongs to the prokaryotic AdoMetDC family. Type 1 subfamily. Heterotetramer of two alpha and two beta chains arranged as a dimer of alpha/beta heterodimers. It depends on pyruvate as a cofactor. In terms of processing, is synthesized initially as an inactive proenzyme. Formation of the active enzyme involves a self-maturation process in which the active site pyruvoyl group is generated from an internal serine residue via an autocatalytic post-translational modification. Two non-identical subunits are generated from the proenzyme in this reaction, and the pyruvate is formed at the N-terminus of the alpha chain, which is derived from the carboxyl end of the proenzyme. The post-translation cleavage follows an unusual pathway, termed non-hydrolytic serinolysis, in which the side chain hydroxyl group of the serine supplies its oxygen atom to form the C-terminus of the beta chain, while the remainder of the serine residue undergoes an oxidative deamination to produce ammonia and the pyruvoyl group blocking the N-terminus of the alpha chain.

It carries out the reaction S-adenosyl-L-methionine + H(+) = S-adenosyl 3-(methylsulfanyl)propylamine + CO2. The protein operates within amine and polyamine biosynthesis; S-adenosylmethioninamine biosynthesis; S-adenosylmethioninamine from S-adenosyl-L-methionine: step 1/1. Catalyzes the decarboxylation of S-adenosylmethionine to S-adenosylmethioninamine (dcAdoMet), the propylamine donor required for the synthesis of the polyamines spermine and spermidine from the diamine putrescine. The chain is S-adenosylmethionine decarboxylase proenzyme from Fervidobacterium nodosum (strain ATCC 35602 / DSM 5306 / Rt17-B1).